A 151-amino-acid chain; its full sequence is Deoxyuridine 5'-triphosphate nucleotidohydrolase (151 aa).

Substrate is bound by residues 70–72 (RSG), Asn-83, 87–89 (LID), and Met-97.

This sequence belongs to the dUTPase family. It depends on Mg(2+) as a cofactor.

It carries out the reaction dUTP + H2O = dUMP + diphosphate + H(+). Its pathway is pyrimidine metabolism; dUMP biosynthesis; dUMP from dCTP (dUTP route): step 2/2. Functionally, this enzyme is involved in nucleotide metabolism: it produces dUMP, the immediate precursor of thymidine nucleotides and it decreases the intracellular concentration of dUTP so that uracil cannot be incorporated into DNA. The chain is Deoxyuridine 5'-triphosphate nucleotidohydrolase from Pseudomonas fluorescens (strain SBW25).